The sequence spans 240 residues: ATP synthase subunit a (240 aa).

5 helical membrane-spanning segments follow: residues 21 to 41, 78 to 98, 116 to 136, 183 to 203, and 212 to 232; these read LSNLMMTFIVCLIVFVFCVWG, IFLPLGLTLIFYILVSNLIGV, DAVMTLTLSTMIIALTHYYGI, ILLSLLVGLATTSIFGFFGAA, and FSVFIGAIQSYVFVMLTMVYM.

Belongs to the ATPase A chain family. As to quaternary structure, F-type ATPases have 2 components, CF(1) - the catalytic core - and CF(0) - the membrane proton channel. CF(1) has five subunits: alpha(3), beta(3), gamma(1), delta(1), epsilon(1). CF(0) has three main subunits: a(1), b(2) and c(9-12). The alpha and beta chains form an alternating ring which encloses part of the gamma chain. CF(1) is attached to CF(0) by a central stalk formed by the gamma and epsilon chains, while a peripheral stalk is formed by the delta and b chains.

It is found in the cell membrane. Its function is as follows. Key component of the proton channel; it plays a direct role in the translocation of protons across the membrane. This chain is ATP synthase subunit a, found in Oceanobacillus iheyensis (strain DSM 14371 / CIP 107618 / JCM 11309 / KCTC 3954 / HTE831).